The following is a 93-amino-acid chain: SH3 domain-binding glutamic acid-rich-like protein 3 (93 aa).

N-acetylserine is present on Ser-2. Positions 2–93 (SGLRVYSTSV…NTLQEFLKLA (92 aa)) constitute a Glutaredoxin domain. A glycan (O-linked (GalNAc...) threonine) is linked at Thr-9.

This sequence belongs to the SH3BGR family. Homodimer. Interacts with MYO1C (via its IQ motifs); the interaction is dependent on calcium and takes place at membrane ruffles. Post-translationally, may be glycosylated.

The protein resides in the cytoplasm. Its subcellular location is the cytosol. It is found in the cell projection. It localises to the ruffle membrane. The protein localises to the nucleus. Functionally, could act as a modulator of glutaredoxin biological activity. May play a role in cytoskeleton organization. This Bos taurus (Bovine) protein is SH3 domain-binding glutamic acid-rich-like protein 3 (SH3BGRL3).